The sequence spans 155 residues: DNA-directed RNA polymerase II subunit rpb4 (155 aa).

Belongs to the eukaryotic RPB4 RNA polymerase subunit family. Component of the RNA polymerase II (Pol II) complex consisting of 12 subunits. RPB4 and RPB7 form a subcomplex that protrudes from the 10-subunit Pol II core complex.

Its subcellular location is the nucleus. DNA-dependent RNA polymerase catalyzes the transcription of DNA into RNA using the four ribonucleoside triphosphates as substrates. Component of RNA polymerase II which synthesizes mRNA precursors and many functional non-coding RNAs. Pol II is the central component of the basal RNA polymerase II transcription machinery. It is composed of mobile elements that move relative to each other. RPB4 is part of a subcomplex with RPB7 that binds to a pocket formed by RPB1, RPB2 and RPB6 at the base of the clamp element. The RPB4-RPB7 subcomplex seems to lock the clamp via RPB7 in the closed conformation thus preventing double-stranded DNA to enter the active site cleft. The RPB4-RPB7 subcomplex binds single-stranded DNA and RNA. The sequence is that of DNA-directed RNA polymerase II subunit rpb4 (polr2d) from Dictyostelium discoideum (Social amoeba).